The sequence spans 83 residues: Pigment-dispersing hormone peptides (83 aa).

Positions 1–24 (MRFIILGVLFIAVASMILSNGVMA) are cleaved as a signal peptide. Position 80 is an alanine amide (A80).

The protein belongs to the arthropod PDH family. In terms of tissue distribution, strongly expressed in eyestalk tissue and cerebral ganglia (at protein level).

The protein resides in the secreted. In terms of biological role, the pigment-dispersing hormone causes the migration of the distal retinal pigment into the proximal end of the pigment chromatophore cells and thus decreases the amount of light entering the retinulas. May also function as a neurotransmitter and/or neuromodulator. The chain is Pigment-dispersing hormone peptides from Eurydice pulchra (Speckled sea louse).